The following is a 483-amino-acid chain: Glutamate--tRNA ligase (483 aa).

The short motif at 11 to 21 is the 'HIGH' region element; sequence PSPTGHLHIGN. The 'KMSKS' region motif lies at 252–256; the sequence is KLSKR. Lysine 255 provides a ligand contact to ATP.

It belongs to the class-I aminoacyl-tRNA synthetase family. Glutamate--tRNA ligase type 1 subfamily. In terms of assembly, monomer.

It localises to the cytoplasm. It catalyses the reaction tRNA(Glu) + L-glutamate + ATP = L-glutamyl-tRNA(Glu) + AMP + diphosphate. In terms of biological role, catalyzes the attachment of glutamate to tRNA(Glu) in a two-step reaction: glutamate is first activated by ATP to form Glu-AMP and then transferred to the acceptor end of tRNA(Glu). The polypeptide is Glutamate--tRNA ligase (Bacillus velezensis (strain DSM 23117 / BGSC 10A6 / LMG 26770 / FZB42) (Bacillus amyloliquefaciens subsp. plantarum)).